Here is a 61-residue protein sequence, read N- to C-terminus: Large ribosomal subunit protein uL30 (61 aa).

The protein belongs to the universal ribosomal protein uL30 family. As to quaternary structure, part of the 50S ribosomal subunit.

This chain is Large ribosomal subunit protein uL30, found in Teredinibacter turnerae (strain ATCC 39867 / T7901).